The primary structure comprises 185 residues: Ribosome-recycling factor (185 aa).

This sequence belongs to the RRF family.

The protein resides in the cytoplasm. Functionally, responsible for the release of ribosomes from messenger RNA at the termination of protein biosynthesis. May increase the efficiency of translation by recycling ribosomes from one round of translation to another. This Nitrosospira multiformis (strain ATCC 25196 / NCIMB 11849 / C 71) protein is Ribosome-recycling factor.